The chain runs to 408 residues: NADH-quinone oxidoreductase subunit D (408 aa).

It belongs to the complex I 49 kDa subunit family. NDH-1 is composed of 14 different subunits. Subunits NuoB, C, D, E, F, and G constitute the peripheral sector of the complex.

It is found in the cell inner membrane. It carries out the reaction a quinone + NADH + 5 H(+)(in) = a quinol + NAD(+) + 4 H(+)(out). In terms of biological role, NDH-1 shuttles electrons from NADH, via FMN and iron-sulfur (Fe-S) centers, to quinones in the respiratory chain. The immediate electron acceptor for the enzyme in this species is believed to be ubiquinone. Couples the redox reaction to proton translocation (for every two electrons transferred, four hydrogen ions are translocated across the cytoplasmic membrane), and thus conserves the redox energy in a proton gradient. This is NADH-quinone oxidoreductase subunit D from Campylobacter jejuni subsp. jejuni serotype O:2 (strain ATCC 700819 / NCTC 11168).